Consider the following 196-residue polypeptide: Neurensin-1 (196 aa).

Helical transmembrane passes span 67–87 (LISG…GFLV) and 121–141 (AVLF…SVFA).

It belongs to the VMP family. Expressed predominantly in brain. Also weakly expressed in lung and spleen. In brain, expressed strongly in nerve fibers of the cerebral cortex, anterior cerebral nuclei, hypothalamus, amygdaloid complex, brain stem of the metaencephalon and medulla oblongata, and moderately expressed in soma of neurons of the dentate gyrus of the hippocampus and Purkinje cells of the cerebellum.

Its subcellular location is the membrane. The protein localises to the cell projection. It localises to the neuron projection. Functionally, may play an important role in neural organelle transport, and in transduction of nerve signals or in nerve growth. May play a role in neurite extension. The sequence is that of Neurensin-1 from Mus musculus (Mouse).